A 100-amino-acid chain; its full sequence is Cell division protein FtsB (100 aa).

Residues 1–3 (MKQ) are Cytoplasmic-facing. A helical transmembrane segment spans residues 4–21 (LIFLLICLLSLLQYRLWL). Topologically, residues 22 to 100 (GDNNLSEYVL…ELRERNPFNR (79 aa)) are periplasmic. Positions 49-73 (RNQILKEEIIDLKRGTEAIEERARN) form a coiled coil.

This sequence belongs to the FtsB family. In terms of assembly, part of a complex composed of FtsB, FtsL and FtsQ.

The protein localises to the cell inner membrane. Essential cell division protein. May link together the upstream cell division proteins, which are predominantly cytoplasmic, with the downstream cell division proteins, which are predominantly periplasmic. This chain is Cell division protein FtsB, found in Shewanella frigidimarina (strain NCIMB 400).